The chain runs to 852 residues: Disks large homolog 2 (852 aa).

2 S-palmitoyl cysteine lipidation sites follow: Cys5 and Cys7. Ser28 carries the post-translational modification Phosphoserine. A Phosphotyrosine modification is found at Tyr58. Ser65 is subject to Phosphoserine. PDZ domains follow at residues 98-184 (EITL…VRRR) and 193-279 (EIKL…VGKP). Residues Ser307, Ser328, Ser360, Ser365, Ser406, and Ser414 each carry the phosphoserine modification. Residues 421–501 (KVVLHKGSTG…QTVTIIAQYQ (81 aa)) form the PDZ 3 domain. Residue Tyr505 is modified to Phosphotyrosine. 3 positions are modified to phosphoserine: Ser528, Ser530, and Ser553. In terms of domain architecture, SH3 spans 536-606 (KRSLYVRAMF…PSKRRVERKE (71 aa)). One can recognise a Guanylate kinase-like domain in the interval 662–837 (TRPVIILGPM…IYNQCKLVIE (176 aa)). Residues Tyr732 and Tyr737 each carry the phosphotyrosine modification.

Belongs to the MAGUK family. Interacts through its PDZ domains with NETO1. Interacts with NOS1/nNOS through second PDZ domain. Interacts with KCNJ2/Kir2.1 (via C-terminus) through one of its PDZ domains. Interacts with KCNJ4. Interacts with FRMPD4 (via C-terminus). Interacts with LRFN1. Interacts with LRFN2 and LRFN4. Interacts with FASLG. Interacts with ADAM22. Interacts with DGKI (via PDZ-binding motif). In terms of processing, palmitoylation of isoform 1 and isoform 2 is not required for targeting to postsynaptic density. Detected in juxtaparanodal zones in the central nervous system and at nerve terminal plexuses of basket cells in the cerebellum (at protein level). Brain. High levels in cerebellar Purkinje cells. Expressed in pyramidal cells of the Ammons's horn and granular cells of the dentate gyrus in the hippocampus as well as cerebral cortex and striatum. High levels in dorsal horn of spinal cord.

The protein resides in the cell membrane. Its subcellular location is the postsynaptic density. The protein localises to the synapse. It is found in the cell projection. It localises to the axon. The protein resides in the membrane. Its subcellular location is the perikaryon. Functionally, required for perception of chronic pain through NMDA receptor signaling. Regulates surface expression of NMDA receptors in dorsal horn neurons of the spinal cord. Interacts with the cytoplasmic tail of NMDA receptor subunits as well as inward rectifying potassium channels. Involved in regulation of synaptic stability at cholinergic synapses. Part of the postsynaptic protein scaffold of excitatory synapses. The polypeptide is Disks large homolog 2 (Dlg2) (Rattus norvegicus (Rat)).